A 538-amino-acid chain; its full sequence is Probable cytochrome P450 309a2 (538 aa).

Position 483 (Cys483) interacts with heme.

It belongs to the cytochrome P450 family. Heme is required as a cofactor.

Its subcellular location is the endoplasmic reticulum membrane. The protein localises to the microsome membrane. In terms of biological role, may be involved in the metabolism of insect hormones and in the breakdown of synthetic insecticides. This chain is Probable cytochrome P450 309a2 (Cyp309a2), found in Drosophila melanogaster (Fruit fly).